Reading from the N-terminus, the 341-residue chain is 3-keto-steroid reductase/17-beta-hydroxysteroid dehydrogenase 7 (341 aa).

The Extracellular segment spans residues 1 to 229; the sequence is MRKVVLITGA…VACPGTALTN (229 aa). Residue 8–15 coordinates NAD(+); it reads TGASSGIG. The N-linked (GlcNAc...) asparagine glycan is linked to N37. S171 provides a ligand contact to substrate. N-linked (GlcNAc...) asparagine glycosylation is present at N178. The active-site Proton acceptor is Y193. N-linked (GlcNAc...) asparagine glycosylation is present at N229. A helical transmembrane segment spans residues 230 to 250; the sequence is LTYGILPPFIWTLLMPAILLL. Residues 251–341 are Cytoplasmic-facing; it reads RFFANAFTLT…NQARLSGSCL (91 aa).

This sequence belongs to the short-chain dehydrogenases/reductases (SDR) family. ERG27 subfamily. In terms of assembly, binds to the short form of prolactin receptor. Phosphorylated. As to expression, highly expressed in adrenal gland, liver, lung and thymus. Expressed in breast, ovaries, pituitary gland, pregnant uterus, prostate, kidney, lymph node, small intestine, spinal cord and trachea. Weakly expressed in all other tissues tested. Expressed in eye ciliary epithelial cells and neuroendocrine cells.

Its subcellular location is the endoplasmic reticulum membrane. The enzyme catalyses 17beta-estradiol + NADP(+) = estrone + NADPH + H(+). It catalyses the reaction a 3beta-hydroxysteroid + NADP(+) = a 3-oxosteroid + NADPH + H(+). The catalysed reaction is 3-dehydro-4alpha-methylzymosterol + NADPH + H(+) = 4alpha-methylzymosterol + NADP(+). It carries out the reaction zymosterone + NADPH + H(+) = zymosterol + NADP(+). The enzyme catalyses 4alpha-methyl-5alpha-cholest-8-en-3-one + NADPH + H(+) = 4alpha-methyl-5alpha-cholest-8-en-3beta-ol + NADP(+). It catalyses the reaction 4alpha-methyl-5alpha-cholest-7-en-3beta-ol + NADP(+) = 4alpha-methyl-5alpha-cholest-7-en-3-one + NADPH + H(+). The catalysed reaction is 5alpha-cholest-8-en-3-one + NADPH + H(+) = 5alpha-cholest-8-en-3beta-ol + NADP(+). It carries out the reaction 5alpha-androstane-3beta,17beta-diol + NADP(+) = 17beta-hydroxy-5alpha-androstan-3-one + NADPH + H(+). The enzyme catalyses progesterone + NADPH + H(+) = 3beta-hydroxypregn-4-ene-20-one + NADP(+). It participates in steroid biosynthesis; estrogen biosynthesis. Its pathway is steroid biosynthesis; zymosterol biosynthesis; zymosterol from lanosterol: step 5/6. Estradiol 17-beta-dehydrogenase and dihydrotestosterone oxidoreductase activities are selectively inhibited by 4-methyl-4-aza-5alpha-androstane derivatives, such as 17beta-[(N-Heptyl)methylamino]-4-aza-5r-androstan-3-one and 17beta-(N-Decylformamido)-4-aza-5r-androstan-3-one. Bifunctional enzyme involved in steroid-hormone metabolism and cholesterol biosynthesis. Catalyzes the NADP(H)-dependent reduction of estrogens and androgens and regulates the biological potency of these steroids. Converts estrone (E1) to a more potent estrogen, 17beta-estradiol (E2). Converts dihydrotestosterone (DHT) to its inactive form 5a-androstane-3b,17b-diol. Converts moderately progesterone to 3beta-hydroxypregn-4-ene-20-one, leading to its inactivation. Additionally, participates in the post-squalene cholesterol biosynthesis, as a 3-ketosteroid reductase. Its function is as follows. Does not have enzymatic activities toward E1 and DHT. This chain is 3-keto-steroid reductase/17-beta-hydroxysteroid dehydrogenase 7 (HSD17B7), found in Homo sapiens (Human).